A 105-amino-acid polypeptide reads, in one-letter code: Large ribosomal subunit protein P1 (105 aa).

Methionine 1 carries the blocked amino end (Met) modification. Over residues 65–76 (VAAPAGQQTQQA) the composition is skewed to low complexity. The tract at residues 65 to 105 (VAAPAGQQTQQAAEKKEEKKEEEKKGPSEEEIGGGLSSLFG) is disordered. Residues 77 to 92 (AEKKEEKKEEEKKGPS) show a composition bias toward basic and acidic residues.

This sequence belongs to the eukaryotic ribosomal protein P1/P2 family. As to quaternary structure, part of the 50S ribosomal subunit. Homodimer, it forms part of the ribosomal stalk which helps the ribosome interact with GTP-bound translation factors. Forms a heptameric uL10/P0(P1)2(P1)2(P1)2 complex, where uL10/P0 forms an elongated spine to which the P1 dimers bind in a sequential fashion.

Forms part of the ribosomal stalk, playing a central role in the interaction of the ribosome with GTP-bound translation factors. This chain is Large ribosomal subunit protein P1, found in Sulfolobus acidocaldarius (strain ATCC 33909 / DSM 639 / JCM 8929 / NBRC 15157 / NCIMB 11770).